Here is a 284-residue protein sequence, read N- to C-terminus: Efem/EfeO family lipoprotein (284 aa).

The signal sequence occupies residues methionine 1 to alanine 17. Cysteine 18 is lipidated: N-palmitoyl cysteine. Cysteine 18 carries the S-diacylglycerol cysteine lipid modification.

The protein belongs to the EfeM/EfeO family.

Its subcellular location is the cell membrane. This chain is Efem/EfeO family lipoprotein, found in Staphylococcus aureus (strain MSSA476).